Reading from the N-terminus, the 34-residue chain is Cytochrome c oxidase subunit 6B (34 aa).

Belongs to the cytochrome c oxidase subunit 6B family. Component of the cytochrome c oxidase (complex IV, CIV), a multisubunit enzyme composed of 14 subunits. The complex is composed of a catalytic core of 3 subunits MT-CO1, MT-CO2 and MT-CO3, encoded in the mitochondrial DNA, and 11 supernumerary subunits COX4I, COX5A, COX5B, COX6A, COX6B, COX6C, COX7A, COX7B, COX7C, COX8 and NDUFA4, which are encoded in the nuclear genome. The complex exists as a monomer or a dimer and forms supercomplexes (SCs) in the inner mitochondrial membrane with NADH-ubiquinone oxidoreductase (complex I, CI) and ubiquinol-cytochrome c oxidoreductase (cytochrome b-c1 complex, complex III, CIII), resulting in different assemblies (supercomplex SCI(1)III(2)IV(1) and megacomplex MCI(2)III(2)IV(2)). In terms of processing, the N-terminus is blocked.

Its subcellular location is the mitochondrion inner membrane. Its pathway is energy metabolism; oxidative phosphorylation. In terms of biological role, component of the cytochrome c oxidase, the last enzyme in the mitochondrial electron transport chain which drives oxidative phosphorylation. The respiratory chain contains 3 multisubunit complexes succinate dehydrogenase (complex II, CII), ubiquinol-cytochrome c oxidoreductase (cytochrome b-c1 complex, complex III, CIII) and cytochrome c oxidase (complex IV, CIV), that cooperate to transfer electrons derived from NADH and succinate to molecular oxygen, creating an electrochemical gradient over the inner membrane that drives transmembrane transport and the ATP synthase. Cytochrome c oxidase is the component of the respiratory chain that catalyzes the reduction of oxygen to water. Electrons originating from reduced cytochrome c in the intermembrane space (IMS) are transferred via the dinuclear copper A center (CU(A)) of subunit 2 and heme A of subunit 1 to the active site in subunit 1, a binuclear center (BNC) formed by heme A3 and copper B (CU(B)). The BNC reduces molecular oxygen to 2 water molecules using 4 electrons from cytochrome c in the IMS and 4 protons from the mitochondrial matrix. The protein is Cytochrome c oxidase subunit 6B of Thunnus obesus (Bigeye tuna).